The following is a 377-amino-acid chain: Carbamoyl phosphate synthase small chain (377 aa).

A CPSase region spans residues 1-186 (MNTPALLVLA…LGKGFVTPDK (186 aa)). Residues serine 47, glycine 238, and glycine 240 each contribute to the L-glutamine site. The Glutamine amidotransferase type-1 domain maps to 190 to 377 (HVVAYDFGVK…IGNMKAAKQA (188 aa)). The active-site Nucleophile is the cysteine 266. Leucine 267, glutamine 270, asparagine 308, glycine 310, and phenylalanine 311 together coordinate L-glutamine. Active-site residues include histidine 350 and glutamate 352.

The protein belongs to the CarA family. As to quaternary structure, composed of two chains; the small (or glutamine) chain promotes the hydrolysis of glutamine to ammonia, which is used by the large (or ammonia) chain to synthesize carbamoyl phosphate. Tetramer of heterodimers (alpha,beta)4.

It carries out the reaction hydrogencarbonate + L-glutamine + 2 ATP + H2O = carbamoyl phosphate + L-glutamate + 2 ADP + phosphate + 2 H(+). It catalyses the reaction L-glutamine + H2O = L-glutamate + NH4(+). It participates in amino-acid biosynthesis; L-arginine biosynthesis; carbamoyl phosphate from bicarbonate: step 1/1. The protein operates within pyrimidine metabolism; UMP biosynthesis via de novo pathway; (S)-dihydroorotate from bicarbonate: step 1/3. In terms of biological role, small subunit of the glutamine-dependent carbamoyl phosphate synthetase (CPSase). CPSase catalyzes the formation of carbamoyl phosphate from the ammonia moiety of glutamine, carbonate, and phosphate donated by ATP, constituting the first step of 2 biosynthetic pathways, one leading to arginine and/or urea and the other to pyrimidine nucleotides. The small subunit (glutamine amidotransferase) binds and cleaves glutamine to supply the large subunit with the substrate ammonia. In Neisseria gonorrhoeae, this protein is Carbamoyl phosphate synthase small chain.